We begin with the raw amino-acid sequence, 562 residues long: Ribonuclease Y (562 aa).

The helical transmembrane segment at 1-21 (MNMLYFVLALLVGLAGGFFVG) threads the bilayer. The tract at residues 108-129 (AAQDAARERETLSADRQETRRE) is disordered. The KH domain occupies 252–312 (SVSVVPIPND…VRREVARHVL (61 aa)). One can recognise an HD domain in the interval 378-471 (VLKHSVQVAH…VAAADAISAA (94 aa)).

It belongs to the RNase Y family.

The protein resides in the cell membrane. Endoribonuclease that initiates mRNA decay. The sequence is that of Ribonuclease Y from Deinococcus geothermalis (strain DSM 11300 / CIP 105573 / AG-3a).